Here is a 435-residue protein sequence, read N- to C-terminus: Tol-Pal system protein TolB (435 aa).

Residues 1 to 28 (MVKCSLIRALMVIAGLIGAAAFTTPANA) form the signal peptide. Residues 288 to 310 (STAAIDTSPSYSPDGARVSFESD) are disordered.

This sequence belongs to the TolB family. The Tol-Pal system is composed of five core proteins: the inner membrane proteins TolA, TolQ and TolR, the periplasmic protein TolB and the outer membrane protein Pal. They form a network linking the inner and outer membranes and the peptidoglycan layer.

The protein localises to the periplasm. Its function is as follows. Part of the Tol-Pal system, which plays a role in outer membrane invagination during cell division and is important for maintaining outer membrane integrity. The sequence is that of Tol-Pal system protein TolB from Rhizobium leguminosarum bv. trifolii (strain WSM2304).